We begin with the raw amino-acid sequence, 423 residues long: Putative transmembrane protein ORF103 (423 aa).

Residues 43–57 show a composition bias toward basic and acidic residues; it reads EPKIEQEEPQQKPEV. The interval 43–91 is disordered; it reads EPKIEQEEPQQKPEVVDVYSNETDKNEEEVSIITSEDEEEDEKGMLFKR. The segment covering 67–84 has biased composition (acidic residues); sequence KNEEEVSIITSEDEEEDE. The next 2 membrane-spanning stretches (helical) occupy residues 125 to 145 and 162 to 182; these read IIGISVRFGFWFALLIPVAVL and FSLCVILFLLLQAGIDLGLAI. The interval 253–282 is disordered; that stretch reads DESGSEVSSEDEESDQETLLRNRKMPTNSK. The next 2 membrane-spanning stretches (helical) occupy residues 326–346 and 366–386; these read LISAMTVIPLLTILFFIIVGS and IPTLCIATYSLNWFVLIMCVL.

It localises to the host membrane. This Magallana gigas (Pacific oyster) protein is Putative transmembrane protein ORF103.